A 534-amino-acid polypeptide reads, in one-letter code: MTRQCPPQESGAALSGSVLAEAAVVFAVVLSIHAAVWDRYSWCAVALAVQAFYVQYKWDRLLQQGNAVFQFRMSANSGLLPASMVMPLLGLVMKERCQTAGNPYFERFGIVVAATGMAVALFSSVLALGITRPVPTNTCAISGLAGGVIIYIMRHSLSVGEVIEVLEVLLIFVYLNMILLYLLPRCFTPGEALLVLGGISFVLNQLIKRSLTESQGDPVDFFLLVVVVGMVLMGVFFSTLFVFMDSGTWASSIFFHLMTCVLGLGVVLPWLHWLIRRNPLLWLLQFLFYTETRIYLLAYWSLLASVACLVVLYQNAKRSSSESKKHRAPTITRKYFHFIVVATYIPGIIFDRPLLYVAATVCLAVFIFLEYVRYFRIKPLGHTLRSLLSLFLDERDSGPLILTHIYLLLGMSLPIWLIPRPCTQKDSLEGARALVPYAGVLAVGVGDTVASIFGSTMGEIRWPGTKKTFEGTMTSIFAQIISVALILIFDSGVDLNYSYAWILGSISTVSLLEAYTTQIDNLLLPLYLLILLMA.

The Cytoplasmic segment spans residues 1-16 (MTRQCPPQESGAALSG). The helical transmembrane segment at 17-37 (SVLAEAAVVFAVVLSIHAAVW) threads the bilayer. Residues 38-72 (DRYSWCAVALAVQAFYVQYKWDRLLQQGNAVFQFR) lie on the Extracellular side of the membrane. A helical membrane pass occupies residues 73 to 93 (MSANSGLLPASMVMPLLGLVM). Residues 94–109 (KERCQTAGNPYFERFG) are Cytoplasmic-facing. Residues 110–130 (IVVAATGMAVALFSSVLALGI) form a helical membrane-spanning segment. Over 131-132 (TR) the chain is Extracellular. Residues 133–153 (PVPTNTCAISGLAGGVIIYIM) form a helical membrane-spanning segment. Residues 154-161 (RHSLSVGE) are Cytoplasmic-facing. Residues 162–182 (VIEVLEVLLIFVYLNMILLYL) form a helical membrane-spanning segment. The Extracellular segment spans residues 183-186 (LPRC). The chain crosses the membrane as a helical span at residues 187-207 (FTPGEALLVLGGISFVLNQLI). Over 208 to 220 (KRSLTESQGDPVD) the chain is Cytoplasmic. The chain crosses the membrane as a helical span at residues 221–241 (FFLLVVVVGMVLMGVFFSTLF). Over 242-252 (VFMDSGTWASS) the chain is Extracellular. The chain crosses the membrane as a helical span at residues 253-273 (IFFHLMTCVLGLGVVLPWLHW). Residues 274–293 (LIRRNPLLWLLQFLFYTETR) are Cytoplasmic-facing. The chain crosses the membrane as a helical span at residues 294–314 (IYLLAYWSLLASVACLVVLYQ). At 315-333 (NAKRSSSESKKHRAPTITR) the chain is on the extracellular side. A helical transmembrane segment spans residues 334 to 350 (KYFHFIVVATYIPGIIF). Topologically, residues 351–355 (DRPLL) are cytoplasmic. A helical membrane pass occupies residues 356–376 (YVAATVCLAVFIFLEYVRYFR). Residues 377–397 (IKPLGHTLRSLLSLFLDERDS) lie on the Extracellular side of the membrane. A helical membrane pass occupies residues 398-418 (GPLILTHIYLLLGMSLPIWLI). At 419-432 (PRPCTQKDSLEGAR) the chain is on the cytoplasmic side. The chain crosses the membrane as a helical span at residues 433–453 (ALVPYAGVLAVGVGDTVASIF). The Extracellular segment spans residues 454-468 (GSTMGEIRWPGTKKT). The CTP-binding stretch occupies residues 455–470 (STMGEIRWPGTKKTFE). Residues 469–489 (FEGTMTSIFAQIISVALILIF) traverse the membrane as a helical segment. At 490–491 (DS) the chain is on the cytoplasmic side. The helical transmembrane segment at 492-512 (GVDLNYSYAWILGSISTVSLL) threads the bilayer. The Extracellular segment spans residues 513-534 (EAYTTQIDNLLLPLYLLILLMA).

Belongs to the polyprenol kinase family.

Its subcellular location is the endoplasmic reticulum membrane. The enzyme catalyses a di-trans,poly-cis-dolichol + CTP = a di-trans,poly-cis-dolichyl phosphate + CDP + H(+). The protein operates within protein modification; protein glycosylation. Catalyzes CTP-mediated phosphorylation of dolichol, the terminal step in de novo dolichyl monophosphate (Dol-P) biosynthesis. Dol-P is a lipid carrier essential for the synthesis of N-linked and O-linked oligosaccharides and for GPI anchors. The polypeptide is Dolichol kinase (Mus musculus (Mouse)).